The following is a 620-amino-acid chain: Toxin coregulated pilus biosynthesis protein I (620 aa).

One can recognise a Methyl-accepting transducer domain in the interval threonine 344 to arginine 580.

The protein belongs to the methyl-accepting chemotaxis (MCP) protein family.

It is found in the cell inner membrane. May function as an environmental regulator of TCP biogenesis. Negatively regulates the synthesis of the major pilin subunit of TCP (TcpA). The sequence is that of Toxin coregulated pilus biosynthesis protein I (tcpI) from Vibrio cholerae serotype O1 (strain ATCC 39541 / Classical Ogawa 395 / O395).